The chain runs to 631 residues: Phosphomethylpyrimidine synthase (631 aa).

Substrate-binding positions include Asn-239, Met-268, Tyr-297, His-333, 353-355, 394-397, and Glu-433; these read SRG and DGLR. His-437 contacts Zn(2+). Tyr-460 contributes to the substrate binding site. Residue His-501 coordinates Zn(2+). Positions 581, 584, and 589 each coordinate [4Fe-4S] cluster.

The protein belongs to the ThiC family. Homodimer. [4Fe-4S] cluster is required as a cofactor.

It carries out the reaction 5-amino-1-(5-phospho-beta-D-ribosyl)imidazole + S-adenosyl-L-methionine = 4-amino-2-methyl-5-(phosphooxymethyl)pyrimidine + CO + 5'-deoxyadenosine + formate + L-methionine + 3 H(+). It participates in cofactor biosynthesis; thiamine diphosphate biosynthesis. In terms of biological role, catalyzes the synthesis of the hydroxymethylpyrimidine phosphate (HMP-P) moiety of thiamine from aminoimidazole ribotide (AIR) in a radical S-adenosyl-L-methionine (SAM)-dependent reaction. This chain is Phosphomethylpyrimidine synthase, found in Salmonella dublin (strain CT_02021853).